A 515-amino-acid chain; its full sequence is Vesicular acetylcholine transporter (515 aa).

The Cytoplasmic portion of the chain corresponds to 1–40; it reads MGVTMAVGLAKAAMGKISSAIGERSKRISGAMNEPRRKRK. The chain crosses the membrane as a helical span at residues 41–61; the sequence is ILLVIVCIAMLLDNMLYMVIV. The Lumenal, vesicle segment spans residues 62-112; sequence PIIPNYLETIRTYKLVYITTPSNGTNGSLLNSTQRAVLERNPNANEDIQIG. N-linked (GlcNAc...) asparagine glycosylation is found at N84, N87, and N92. The chain crosses the membrane as a helical span at residues 113–133; sequence VLFASKAILQLLSNPFTGTFI. Residues 134-139 are Cytoplasmic-facing; that stretch reads DRVGYD. A helical membrane pass occupies residues 140-160; sequence IPLLIGLTIMFFSTITFAFGE. Over 161–169 the chain is Lumenal, vesicle; it reads SYAVLFAAR. A helical transmembrane segment spans residues 170–190; that stretch reads SLQGLGSAFADTSGIAMIADK. Residues 191–201 are Cytoplasmic-facing; the sequence is YTEESERTQAL. A helical transmembrane segment spans residues 202–222; the sequence is GIALAFISFGSLVAPPFGGVL. Topologically, residues 223–229 are lumenal, vesicle; the sequence is YQFAGKW. Residues 230 to 250 traverse the membrane as a helical segment; that stretch reads VPFLVLSFVCLLDGILLLMVV. The Cytoplasmic portion of the chain corresponds to 251 to 271; it reads TPFASRTRENMLQGTPIYKLM. Residues 272-292 traverse the membrane as a helical segment; that stretch reads IDPYIAVVAGALTTCNIPLAF. Over 293 to 310 the chain is Lumenal, vesicle; sequence LEPTISNWMKKTMNASEW. N-linked (GlcNAc...) asparagine glycosylation is present at N306. A helical membrane pass occupies residues 311–331; sequence QMGITWLPAFFPHILGVYITV. Residues 332–341 lie on the Cytoplasmic side of the membrane; sequence KLAAKYPNYQ. A helical transmembrane segment spans residues 342 to 362; it reads WFYGAVGLVIIGASSCTIPAC. Over 363-367 the chain is Lumenal, vesicle; the sequence is RNFEE. A helical transmembrane segment spans residues 368 to 388; it reads LIIPLCALCFGIALVDTALLP. Topologically, residues 389–404 are cytoplasmic; sequence TLAFLVDIRYVSVYGS. A helical membrane pass occupies residues 405–425; the sequence is VYAIADISYSVAYALGPIMAG. The Lumenal, vesicle portion of the chain corresponds to 426 to 432; sequence QIVHDLG. Residues 433 to 453 form a helical membrane-spanning segment; it reads FVQLNLGMGLVNILYAPALLF. Residues 454–515 are Cytoplasmic-facing; sequence LRNVCQMKPS…VLSDQEGYSE (62 aa). The segment at 489–515 is disordered; sequence AAKEPHGSSSGNHSVHAVLSDQEGYSE.

This sequence belongs to the major facilitator superfamily. Vesicular transporter family. Electric lobe.

The protein localises to the membrane. Its function is as follows. Involved in acetylcholine transport into synaptic vesicles. The chain is Vesicular acetylcholine transporter from Tetronarce californica (Pacific electric ray).